Consider the following 122-residue polypeptide: Large ribosomal subunit protein uL18 (122 aa).

This sequence belongs to the universal ribosomal protein uL18 family. In terms of assembly, part of the 50S ribosomal subunit; part of the 5S rRNA/L5/L18/L25 subcomplex. Contacts the 5S and 23S rRNAs.

In terms of biological role, this is one of the proteins that bind and probably mediate the attachment of the 5S RNA into the large ribosomal subunit, where it forms part of the central protuberance. In Prochlorococcus marinus (strain MIT 9515), this protein is Large ribosomal subunit protein uL18.